The sequence spans 250 residues: Protein lin-28 homolog B (250 aa).

Disordered regions lie at residues 1 to 27 and 98 to 126; these read MAEAGASKGGEEPGRLPEHEEEEESPL and RVTGPGGSPCLGSERRPKGKTVQKRKPKG. Over residues 9 to 18 the composition is skewed to basic and acidic residues; the sequence is GGEEPGRLPE. In terms of domain architecture, CSD spans 29 to 102; that stretch reads HGAGHCKWFN…GLESIRVTGP (74 aa). Residues 114 to 125 show a composition bias toward basic residues; the sequence is PKGKTVQKRKPK. 2 consecutive CCHC-type zinc fingers follow at residues 127-144 and 149-166; these read DRCYNCGGLDHHAKECSL and KKCHYCQSIMHMVANCPH. The Zn(2+) site is built by C129, C132, H137, C142, C151, C154, H159, and C164. The interval 165–250 is disordered; sequence PHKTVSQQPT…GPSVQKRKKT (86 aa). Residues 168 to 177 show a composition bias toward polar residues; that stretch reads TVSQQPTSSQ. The segment covering 200–209 has biased composition (low complexity); the sequence is GYSSPSYSQE. Positions 210 to 219 are enriched in basic and acidic residues; sequence GRSEISERSG.

It belongs to the lin-28 family.

The protein localises to the nucleus. It localises to the nucleolus. Suppressor of specific microRNA (miRNA) biogenesis. Binds target primary miRNA transcripts and sequester them in the nucleolus, away from the microprocessor complex, hence preventing their processing into mature miRNA. The specific interaction with target pri-miRNAs occurs via an 5'-GGAG-3' motif in the pre-miRNA terminal loop. This is Protein lin-28 homolog B (LIN28B) from Gallus gallus (Chicken).